The primary structure comprises 522 residues: Serine/threonine-protein kinase pak-2 (522 aa).

Positions 16 to 29 constitute a CRIB domain; it reads ISTPSNFEHRIHAG. The span at 183-204 shows a compositional bias: polar residues; sequence TTTPQLQPKSPSTPQAMRQQPK. Residues 183-208 are disordered; sequence TTTPQLQPKSPSTPQAMRQQPKCTEG. Positions 231–482 constitute a Protein kinase domain; that stretch reads LTDYKQIGEG…AKDLLRHPFF (252 aa). ATP-binding positions include 237–245 and K260; that span reads IGEGSTGVV. The Proton acceptor role is filled by D350.

The protein belongs to the protein kinase superfamily. STE Ser/Thr protein kinase family. STE20 subfamily. Mg(2+) is required as a cofactor. Requires Mn(2+) as cofactor. Expressed in pharynx, vulva and spermatheca. Unlike other p21-activated kinases, expression is not detected in neurons.

It carries out the reaction L-seryl-[protein] + ATP = O-phospho-L-seryl-[protein] + ADP + H(+). The enzyme catalyses L-threonyl-[protein] + ATP = O-phospho-L-threonyl-[protein] + ADP + H(+). In terms of biological role, serine/threonine-protein kinase which plays a redundant role with pak-1 in embryogenesis but, in contrast to pak-1, is not involved in commissural axon guidance of ventral cord motoneurons or in distal tip cell (DTC) migration. This is Serine/threonine-protein kinase pak-2 from Caenorhabditis elegans.